Reading from the N-terminus, the 328-residue chain is Malate dehydrogenase 1 (328 aa).

12-18 (GAAGQIA) lines the NAD(+) pocket. Substrate is bound by residues arginine 93 and arginine 99. Residues asparagine 106, glutamine 113, and 130–132 (VGN) contribute to the NAD(+) site. Residues asparagine 132 and arginine 163 each coordinate substrate. The active-site Proton acceptor is the histidine 188.

The protein belongs to the LDH/MDH superfamily. MDH type 2 family.

The enzyme catalyses (S)-malate + NAD(+) = oxaloacetate + NADH + H(+). Its function is as follows. Catalyzes the reversible oxidation of malate to oxaloacetate. This is Malate dehydrogenase 1 from Burkholderia vietnamiensis (strain G4 / LMG 22486) (Burkholderia cepacia (strain R1808)).